A 141-amino-acid polypeptide reads, in one-letter code: Hemoglobin subunit alpha-A (141 aa).

In terms of domain architecture, Globin spans 1–141 (VLSGPDKTNV…VGAVLTAKYR (141 aa)). Histidine 58 is a binding site for O2. Position 87 (histidine 87) interacts with heme b.

This sequence belongs to the globin family. Heterotetramer of two alpha chains and two beta chains. Red blood cells.

In terms of biological role, involved in oxygen transport from the lung to the various peripheral tissues. This Rhea americana (Greater rhea) protein is Hemoglobin subunit alpha-A (HBAA).